We begin with the raw amino-acid sequence, 260 residues long: Acetylglutamate kinase (260 aa).

Substrate-binding positions include glycine 46–glycine 47, arginine 68, and asparagine 160.

It belongs to the acetylglutamate kinase family. ArgB subfamily.

The protein localises to the cytoplasm. It carries out the reaction N-acetyl-L-glutamate + ATP = N-acetyl-L-glutamyl 5-phosphate + ADP. Its pathway is amino-acid biosynthesis; L-arginine biosynthesis; N(2)-acetyl-L-ornithine from L-glutamate: step 2/4. Functionally, catalyzes the ATP-dependent phosphorylation of N-acetyl-L-glutamate. The protein is Acetylglutamate kinase of Shewanella sp. (strain MR-7).